Consider the following 475-residue polypeptide: MKSELIFLPAPAIGHLVGMVEMAKLFISRHENLSVTVFISKFYMDTGVDNYNKSLLTNPTPRLTIVNLPETDPQNYMLKPRHAILPSVIETQKTHVRDIISGMTQSESTRVVGLLADLLFINIMDIANEFNVPIYVYSPAGAGYLGLAFHLQTLYDKKQDVTEFRNSDTELLVPGFANPVPAEVLPSMYVDKEGGYDYLFSLFRRCRESKAIIINTFEELEPYAINSLRMDSMIPPIYPVGPILNLNGDGQNSDEAAVILGWLDDQPPSSVVFLCFGSYGTFQENQVKEIAMGLERSGHRFLWALRPSIPKGETKLQLKYSNLEEILPVGFLDRTSCVGKVIGWAPQVAVLGHEAVAGFMSHCGWNSTLESVWFGVPVATWPMYGEQHLNAFEMVKELGLAVEIEVDYKNEYFNTKNDFIVRAEEIETKIKKLMMDEKNSEIRKKVKEMKEKSRVAMSENGSSYNSLAKLFEEIM.

UDP-alpha-D-glucose-binding positions include Ser-278, 344–345 (WA), 362–370 (HCGWNSTLE), and 384–387 (YGEQ).

It belongs to the UDP-glycosyltransferase family.

The protein operates within secondary metabolite biosynthesis; terpenoid biosynthesis. Functionally, probable component of the triterpene saponins (e.g. ginsenosides) biosynthetic pathway. No detectable activity toward protopanaxatriol (PPT). This chain is UDP-glucosyltransferase 102 (UGT102), found in Panax ginseng (Korean ginseng).